Here is a 213-residue protein sequence, read N- to C-terminus: Heterochromatin protein 1 (213 aa).

Disordered regions lie at residues 1–24 (MGKK…EEEY) and 74–151 (RKDE…TGFD). Residues 24–82 (YAVEKILDRRVRKGKVEYYLKWKGYAETENTWEPEGNLDCQDLIQQYELSRKDEANAAA) form the Chromo 1 domain. A compositionally biased stretch (basic and acidic residues) spans 89–104 (SKKERPGSSTKVKETG). Polar residues predominate over residues 105–115 (RTSTTASNSSG). A Chromo 2 domain is found at 154-212 (LEAEKILGASDNNGRLTFLIQFKGVDQAEMVPSTVANVKIPQMVIRFYEERLSWYSDNE).

The protein resides in the nucleus. Structural component of heterochromatin, involved in gene repression and the modification of position-effect-variegation. Recognizes and binds histone H3 tails methylated at 'Lys-9', leading to epigenetic repression. The sequence is that of Heterochromatin protein 1 (HP1A) from Drosophila virilis (Fruit fly).